The chain runs to 335 residues: Putative serine/threonine-protein kinase 040L (335 aa).

The 297-residue stretch at 33-329 (YYYQEFHDEG…DRLTELHHHL (297 aa)) folds into the Protein kinase domain. ATP-binding positions include 39-47 (HDEGGYGSI) and Lys-62. The active-site Proton acceptor is the Asp-196.

This sequence belongs to the protein kinase superfamily. Ser/Thr protein kinase family.

In Invertebrate iridescent virus 3 (IIV-3), this protein is Putative serine/threonine-protein kinase 040L.